The chain runs to 179 residues: Centromere protein R (179 aa).

Residues 1–79 form a disordered region; that stretch reads MSAKRSLKLD…RLSRRGQPQT (79 aa). A compositionally biased stretch (polar residues) spans 30-50; that stretch reads NSYSPTTGTCQISPFSSPTSH. Residues 51-64 are compositionally biased toward basic and acidic residues; that stretch reads NAEDLRNGLSHGDE. An LXXLL motif motif is present at residues 172–176; it reads LQLLL.

It localises to the nucleus. Its subcellular location is the chromosome. The protein localises to the centromere. It is found in the kinetochore. Functionally, transcription coregulator that can have both coactivator and corepressor functions. Involved in the coactivation of nuclear receptors for retinoid X (RXRs) and thyroid hormone (TRs) in a ligand-dependent fashion. Probable component of a centromeric complex involved in assembly of kinetochore proteins, mitotic progression and chromosome segregation. The chain is Centromere protein R (CENPR) from Gallus gallus (Chicken).